We begin with the raw amino-acid sequence, 270 residues long: SPbeta prophage-derived DNA ligase-like protein LigB (270 aa).

Lys-25 (N6-AMP-lysine intermediate) is an active-site residue.

This sequence belongs to the ATP-dependent DNA ligase family.

The sequence is that of SPbeta prophage-derived DNA ligase-like protein LigB (ligB) from Bacillus subtilis (strain 168).